A 153-amino-acid chain; its full sequence is uncharacterized protein (153 aa).

An N-terminal signal peptide occupies residues 1-22 (MKAFNKLFSLVVASVLVFSLAG). C23 is lipidated: N-palmitoyl cysteine. The S-diacylglycerol cysteine moiety is linked to residue C23.

This sequence to L.monocytogenes lmo0207.

Its subcellular location is the cell membrane. This is an uncharacterized protein from Escherichia coli (strain K12).